A 144-amino-acid polypeptide reads, in one-letter code: Large ribosomal subunit protein uL24 (144 aa).

The interval 102–144 is disordered; the sequence is NIVVEKPEPEPEPRKEETAEAQEAKEEAVAEEKTEVDDNDKQN. Basic and acidic residues predominate over residues 103 to 134; it reads IVVEKPEPEPEPRKEETAEAQEAKEEAVAEEK. A compositionally biased stretch (acidic residues) spans 135–144; sequence TEVDDNDKQN.

It belongs to the universal ribosomal protein uL24 family. Part of the 50S ribosomal subunit.

Its function is as follows. One of two assembly initiator proteins, it binds directly to the 5'-end of the 23S rRNA, where it nucleates assembly of the 50S subunit. Located at the polypeptide exit tunnel on the outside of the subunit. The sequence is that of Large ribosomal subunit protein uL24 (rpl24) from Thermoplasma acidophilum (strain ATCC 25905 / DSM 1728 / JCM 9062 / NBRC 15155 / AMRC-C165).